The primary structure comprises 80 residues: MKPSSLLLFTTTILLCLSMAQPRATRKGVTPKQGYCPEFLLDCPFVLLPVCSRDKGCKGTKKCCFYYCQMRCVEPWTTLT.

An N-terminal signal peptide occupies residues 1-20 (MKPSSLLLFTTTILLCLSMA). Residues 29 to 76 (VTPKQGYCPEFLLDCPFVLLPVCSRDKGCKGTKKCCFYYCQMRCVEPW) form the WAP domain. Intrachain disulfides connect Cys-36–Cys-64, Cys-43–Cys-68, Cys-51–Cys-63, and Cys-57–Cys-72.

It is found in the secreted. Its function is as follows. Antibacterial protein. This Mus musculus (Mouse) protein is WAP four-disulfide core domain protein 15A.